The sequence spans 283 residues: Putative 4-diphosphocytidyl-2-C-methyl-D-erythritol kinase (283 aa).

Lysine 10 is a catalytic residue. Residue 94–104 (PVCAGLGGGST) participates in ATP binding. The active site involves aspartate 136.

The protein belongs to the GHMP kinase family. IspE subfamily.

The catalysed reaction is 4-CDP-2-C-methyl-D-erythritol + ATP = 4-CDP-2-C-methyl-D-erythritol 2-phosphate + ADP + H(+). Its function is as follows. Catalyzes the phosphorylation of the position 2 hydroxy group of 4-diphosphocytidyl-2C-methyl-D-erythritol. The polypeptide is Putative 4-diphosphocytidyl-2-C-methyl-D-erythritol kinase (Streptococcus agalactiae serotype III (strain NEM316)).